The chain runs to 55 residues: Cortexin domain containing 2 (55 aa).

The helical transmembrane segment at 16-36 (FAIAFVVLLFLFLIVMIFRCA) threads the bilayer.

Its subcellular location is the membrane. This Homo sapiens (Human) protein is Cortexin domain containing 2.